A 246-amino-acid chain; its full sequence is Putative 4'-phosphopantetheinyl transferase slr0495 (246 aa).

Residues D110 and E156 each coordinate Mg(2+).

This sequence belongs to the P-Pant transferase superfamily. Gsp/Sfp/HetI/AcpT family. Requires Mg(2+) as cofactor.

Its function is as follows. Probably transfers the 4'-phosphopantetheine moiety from coenzyme A (CoA) to a serine residue of a carrier protein domain. This Synechocystis sp. (strain ATCC 27184 / PCC 6803 / Kazusa) protein is Putative 4'-phosphopantetheinyl transferase slr0495.